The following is a 145-amino-acid chain: Basic phospholipase A2 P'513 (145 aa).

The signal sequence occupies residues 1-21 (MYPAHLLLLLAVCVSLLGASA). Positions 22–27 (IPPLPL) are excised as a propeptide. 7 disulfides stabilise this stretch: cysteine 38/cysteine 98, cysteine 54/cysteine 144, cysteine 56/cysteine 72, cysteine 71/cysteine 125, cysteine 78/cysteine 118, cysteine 87/cysteine 111, and cysteine 105/cysteine 116. Residues tyrosine 55, glycine 57, and glycine 59 each contribute to the Ca(2+) site. Residue histidine 75 is part of the active site. Aspartate 76 provides a ligand contact to Ca(2+). Aspartate 119 is a catalytic residue.

This sequence belongs to the phospholipase A2 family. Group I subfamily. D49 sub-subfamily. It depends on Ca(2+) as a cofactor. In terms of tissue distribution, expressed by the venom gland.

The protein resides in the secreted. The enzyme catalyses a 1,2-diacyl-sn-glycero-3-phosphocholine + H2O = a 1-acyl-sn-glycero-3-phosphocholine + a fatty acid + H(+). PLA2 catalyzes the calcium-dependent hydrolysis of the 2-acyl groups in 3-sn-phosphoglycerides. The polypeptide is Basic phospholipase A2 P'513 (Laticauda laticaudata (Blue-ringed sea krait)).